Consider the following 154-residue polypeptide: Fibroblast growth factor 2 (154 aa).

Residues 1-9 constitute a propeptide that is removed on maturation; the sequence is MAASGITSL. Position 35 (Asn35) interacts with heparin. Tyr81 carries the phosphotyrosine; by TEC modification. Residue Lys94 forms a Glycyl lysine isopeptide (Lys-Gly) (interchain with G-Cter in SUMO1) linkage. Residues 127–143 are heparin-binding; it reads KRTGQYKLGSKTGPGQK.

This sequence belongs to the heparin-binding growth factors family. Monomer. Homodimer. Interacts with FGFR1, FGFR2, FGFR3 and FGFR4. Affinity between fibroblast growth factors (FGFs) and their receptors is increased by heparan sulfate glycosaminoglycans that function as coreceptors. Interacts with CSPG4, FGFBP1 and TEC. Found in a complex with FGFBP1, FGF1 and FGF2. Interacts with FGFBP3. Interacts with integrin ITGAV:ITGB3; the interaction is required for FGF2 signaling. Interacts with SNORC (via the extracellular domain). Interacts with glypican GPC3. Phosphorylation at Tyr-81 regulates FGF2 unconventional secretion.

The protein resides in the secreted. It localises to the nucleus. In terms of biological role, acts as a ligand for FGFR1, FGFR2, FGFR3 and FGFR4. Also acts as an integrin ligand which is required for FGF2 signaling. Binds to integrin ITGAV:ITGB3. Plays an important role in the regulation of cell survival, cell division, cell differentiation and cell migration. Functions as a potent mitogen in vitro. Can induce angiogenesis. Mediates phosphorylation of ERK1/2 and thereby promotes retinal lens fiber differentiation. The chain is Fibroblast growth factor 2 (Fgf2) from Mus musculus (Mouse).